The following is a 278-amino-acid chain: Chitosanase (278 aa).

The signal sequence occupies residues 1–40 (MHSQHRTARIALAVVLTAIPASLATAGVGYASTQASTAVK). The Proton donor role is filled by E62. D80 acts as the Nucleophile in catalysis.

The protein belongs to the glycosyl hydrolase 46 family.

It localises to the secreted. It catalyses the reaction Endohydrolysis of beta-(1-&gt;4)-linkages between D-glucosamine residues in a partly acetylated chitosan.. Aids in the defense against invading fungal pathogens by degrading their cell wall chitosan. The chain is Chitosanase (csn) from Streptomyces sp. (strain N174).